Reading from the N-terminus, the 837-residue chain is Protein translocase subunit SecA 1 (837 aa).

ATP contacts are provided by residues Q85, 103–107, and D492; that span reads GEGKT. A compositionally biased stretch (basic and acidic residues) spans 787 to 806; that stretch reads QEVAKGEAVHPKEDGEEPKK. Residues 787–813 form a disordered region; it reads QEVAKGEAVHPKEDGEEPKKKPIRKAV. C821, C823, C832, and C833 together coordinate Zn(2+).

The protein belongs to the SecA family. In terms of assembly, monomer and homodimer. Part of the essential Sec protein translocation apparatus which comprises SecA, SecYEG and auxiliary proteins SecDF. Other proteins may also be involved. Zn(2+) serves as cofactor.

The protein resides in the cell membrane. The protein localises to the cytoplasm. It carries out the reaction ATP + H2O + cellular proteinSide 1 = ADP + phosphate + cellular proteinSide 2.. Functionally, part of the Sec protein translocase complex. Interacts with the SecYEG preprotein conducting channel. Has a central role in coupling the hydrolysis of ATP to the transfer of proteins into and across the cell membrane, serving as an ATP-driven molecular motor driving the stepwise translocation of polypeptide chains across the membrane. This Geobacillus thermodenitrificans (strain NG80-2) protein is Protein translocase subunit SecA 1.